A 304-amino-acid chain; its full sequence is MESWARCIFLLLLQILTGGRGDILHSGAGKIVGGQDAPEGRWPWQVSLRTEKEGHICGGSLIHEVWVLTAAHCFRRPLNSSFYHVKVGGLTLSLTEPHSTLVAVRNIFVYPTYLWEDASSGDIALLRLDTPLQPSQFSPVCLPQAQAPLTPGTVCWVTGWGATHERELASVLQELAVPLLDSEDCERMYHIGETSLSGKRVIQSDMLCAGFVEGQKDSCQGDSGGPLVCAINSSWIQVGITSWGIGCARPNKPGVYTRVPDYVDWIQRTLAENHSDAYGCRSRASGAYPALLLVLLAFALPESL.

Positions 1 to 21 (MESWARCIFLLLLQILTGGRG) are cleaved as a signal peptide. A propeptide spans 22–30 (DILHSGAGK) (activation peptide). The Peptidase S1 domain maps to 31–271 (IVGGQDAPEG…YVDWIQRTLA (241 aa)). Cysteine 57 and cysteine 73 are oxidised to a cystine. Histidine 72 acts as the Charge relay system in catalysis. Asparagine 79 carries an N-linked (GlcNAc...) asparagine glycan. The active-site Charge relay system is aspartate 122. 3 disulfide bridges follow: cysteine 155–cysteine 229, cysteine 185–cysteine 208, and cysteine 219–cysteine 247. The Charge relay system role is filled by serine 223. 2 N-linked (GlcNAc...) asparagine glycosylation sites follow: asparagine 232 and asparagine 273. Serine 275 is lipidated: GPI-anchor amidated serine. A propeptide spans 276–304 (DAYGCRSRASGAYPALLLVLLAFALPESL) (removed in mature form).

This sequence belongs to the peptidase S1 family. As to expression, expressed predominantly in kidney, small intestine and stomach and moderately in thymus, lung, spleen, testis and skin. In the kidney, expressed mainly in collecting duct of renal medulla and cortex.

The protein resides in the cell membrane. Its activity is regulated as follows. Inhibited by aprotinin, leupeptin, benzamidine and soybean trypsin inhibitor. Partially inhibited by PMSF and DFP. In terms of biological role, selectively cleaves synthetic peptide substrates of trypsin. Activates the epithelial sodium channel ENaC. The chain is Serine protease 30 (Prss30) from Rattus norvegicus (Rat).